An 860-amino-acid chain; its full sequence is Alanine--tRNA ligase (860 aa).

The Zn(2+) site is built by H553, H557, C655, and H659.

Belongs to the class-II aminoacyl-tRNA synthetase family. Zn(2+) serves as cofactor.

It localises to the cytoplasm. The enzyme catalyses tRNA(Ala) + L-alanine + ATP = L-alanyl-tRNA(Ala) + AMP + diphosphate. Functionally, catalyzes the attachment of alanine to tRNA(Ala) in a two-step reaction: alanine is first activated by ATP to form Ala-AMP and then transferred to the acceptor end of tRNA(Ala). Also edits incorrectly charged Ser-tRNA(Ala) and Gly-tRNA(Ala) via its editing domain. This chain is Alanine--tRNA ligase, found in Legionella pneumophila (strain Corby).